We begin with the raw amino-acid sequence, 894 residues long: RNA polymerase I-specific transcription initiation factor RRN6 (894 aa).

Residues 803 to 894 (PPFNLNSQSQ…KKKKRIRGFG (92 aa)) form a disordered region. Composition is skewed to polar residues over residues 806–823 (NLNS…QSSG), 832–849 (KTQS…QNLS), and 863–880 (QPPS…PRNS). A compositionally biased stretch (basic residues) spans 881–894 (QKAKKKKKRIRGFG).

Component of the core factor (CF) complex, which consists of RRN6, RRN7 and RRN11. The CF heterotrimer may further dimerize to form a hexamer. RRN6 interacts with RRN7, RRN11 and RRN9.

It localises to the cytoplasm. Its subcellular location is the nucleus. The protein localises to the nucleolus. In terms of biological role, acts as a component of the core factor (CF) complex which is essential for the initiation of rDNA transcription by RNA polymerase I. After binding of UAF (upstream activation factor) to an upstream element of the promoter, CF is recruited in a SPT15/TBP-dependent manner to form a preinitiation complex. In Saccharomyces cerevisiae (strain ATCC 204508 / S288c) (Baker's yeast), this protein is RNA polymerase I-specific transcription initiation factor RRN6 (RRN6).